A 508-amino-acid chain; its full sequence is Light-independent protochlorophyllide reductase subunit B (508 aa).

[4Fe-4S] cluster is bound at residue aspartate 36. Aspartate 294 functions as the Proton donor in the catalytic mechanism. Residue 429 to 430 (GM) coordinates substrate.

This sequence belongs to the ChlB/BchB/BchZ family. In terms of assembly, protochlorophyllide reductase is composed of three subunits; ChlL, ChlN and ChlB. Forms a heterotetramer of two ChlB and two ChlN subunits. [4Fe-4S] cluster is required as a cofactor.

It carries out the reaction chlorophyllide a + oxidized 2[4Fe-4S]-[ferredoxin] + 2 ADP + 2 phosphate = protochlorophyllide a + reduced 2[4Fe-4S]-[ferredoxin] + 2 ATP + 2 H2O. It participates in porphyrin-containing compound metabolism; chlorophyll biosynthesis (light-independent). In terms of biological role, component of the dark-operative protochlorophyllide reductase (DPOR) that uses Mg-ATP and reduced ferredoxin to reduce ring D of protochlorophyllide (Pchlide) to form chlorophyllide a (Chlide). This reaction is light-independent. The NB-protein (ChlN-ChlB) is the catalytic component of the complex. This Thermosynechococcus vestitus (strain NIES-2133 / IAM M-273 / BP-1) protein is Light-independent protochlorophyllide reductase subunit B.